We begin with the raw amino-acid sequence, 278 residues long: Urease accessory protein UreD (278 aa).

This sequence belongs to the UreD family. UreD, UreF and UreG form a complex that acts as a GTP-hydrolysis-dependent molecular chaperone, activating the urease apoprotein by helping to assemble the nickel containing metallocenter of UreC. The UreE protein probably delivers the nickel.

Its subcellular location is the cytoplasm. Its function is as follows. Required for maturation of urease via the functional incorporation of the urease nickel metallocenter. This chain is Urease accessory protein UreD, found in Pseudomonas putida (strain ATCC 700007 / DSM 6899 / JCM 31910 / BCRC 17059 / LMG 24140 / F1).